We begin with the raw amino-acid sequence, 1101 residues long: Zinc finger SWIM domain-containing protein 4 (1101 aa).

The segment at 1 to 29 is disordered; sequence MEPPAAKRSRGCPAGDEPGTGARRSRPEP. The SWIM-type zinc-finger motif lies at 134-171; the sequence is YHVSISFDRCKITSVSCGCDNRDLFYCAHVVALSLYRI.

The sequence is that of Zinc finger SWIM domain-containing protein 4 (Zswim4) from Mus musculus (Mouse).